The sequence spans 318 residues: Probable aminopeptidase YbaC (318 aa).

The active-site Nucleophile is Ser115. Residue Asp266 is part of the active site. The Proton donor role is filled by His296.

The protein belongs to the peptidase S33 family.

Its function is as follows. Probable aminopeptidase. This chain is Probable aminopeptidase YbaC (ybaC), found in Bacillus subtilis (strain 168).